A 246-amino-acid polypeptide reads, in one-letter code: C-X-C motif chemokine 16 (246 aa).

The first 26 residues, 1-26 (MRRGFGPLSLAFFLFLLALLTLPGDG), serve as a signal peptide directing secretion. Topologically, residues 27-201 (NQGSVAGSCS…PGAGASTPAW (175 aa)) are extracellular. Disulfide bonds link Cys35/Cys65 and Cys37/Cys79. Disordered stretches follow at residues 104–150 (GKSF…SGAL) and 175–198 (PEAE…GAST). The span at 128–146 (PSDTSTPAHSQSTQHSTLP) shows a compositional bias: polar residues. The segment covering 175–189 (PEAEANEKQQDDRQQ) has biased composition (basic and acidic residues). Residues 202–222 (VPVLSLLAIVFFLTAAMAYVL) traverse the membrane as a helical segment. The Cytoplasmic segment spans residues 223–246 (CNRRATQQNSAGLQLWYTPVEPRP).

The protein belongs to the intercrine alpha (chemokine CxC) family. In terms of processing, glycosylated. Widely expressed. Not detected in purified B- and T-cells.

Its subcellular location is the membrane. Functionally, induces a strong chemotactic response. Induces calcium mobilization. Binds to CXCR6/Bonzo. Also acts as a scavenger receptor on macrophages, which specifically binds to OxLDL (oxidized low density lipoprotein), suggesting that it may be involved in pathophysiology such as atherogenesis. This chain is C-X-C motif chemokine 16 (Cxcl16), found in Mus musculus (Mouse).